The chain runs to 1122 residues: Phytochrome A (1122 aa).

Residues 1–11 are compositionally biased toward polar residues; sequence MSGSRPTQSSE. The interval 1-21 is disordered; that stretch reads MSGSRPTQSSEGSRRSRHSAR. A GAF domain is found at 218-402; that stretch reads SMERLCDTMV…VFAIHVNKEV (185 aa). Cys323 lines the phytochromobilin pocket. One can recognise a PAS 1 domain in the interval 618-688; it reads VTSEMVRLIE…RMLENALEGT (71 aa). The PAC domain maps to 695–747; it reads FEIKTHLSRADAGPISLVVNACASRDLHENVVGVCFVAHDLTGQKTVMDKFTR. A PAS 2 domain is found at 748–822; it reads IEGDYKAIIQ…KNQEAFVNLG (75 aa). Residues 902 to 1119 enclose the Histidine kinase domain; sequence YIKRQIRNPL…SFIITAELAA (218 aa).

This sequence belongs to the phytochrome family. Homodimer. Interacts with NDPK2 and PKS4. Stabilized by interactions with PAPP5 and FYPP3 which are enhanced in the phosphorylated Pfr form. Interacts with COP1/SPA1 complex. Binds, via its photosensory domain, to PTAC12/HMR when photoactivated; this interaction stimulates its localization to photobodies. Interacts with FHY1, FHL and FHY3, especially upon far-red (FR) light illumination; when underphosphorylated. Forms PHYA/FHY1/HFR1 complex. Binds to PIF3/PAP3. Phosphorylated. Post-translationally, contains one covalently linked phytochromobilin chromophore. As to expression, expressed in fruits, flowers, leaves, stems, seedlings and roots.

It is found in the cytoplasm. It localises to the nucleus. Its subcellular location is the nucleoplasm. The protein localises to the nucleus speckle. Regulatory photoreceptor which exists in two forms that are reversibly interconvertible by light: the Pr form that absorbs maximally in the red region of the spectrum and the Pfr form that absorbs maximally in the far-red region. Photoconversion of Pr to Pfr induces an array of morphogenetic responses, whereas reconversion of Pfr to Pr cancels the induction of those responses. Pfr controls the expression of a number of nuclear genes including those encoding the small subunit of ribulose-bisphosphate carboxylase, chlorophyll A/B binding protein, protochlorophyllide reductase, rRNA, etc. It also controls the expression of its own gene(s) in a negative feedback fashion. Involved in the flowering time regulation. Can phosphorylate FHY1 and, possibly, FHL, in red light conditions; this inactivates their co-shuttling to the nucleus. Regulates phototropic responses both in the nucleus (e.g. hypocotyl elongation and cotyledon opening under high-irradiance conditions and seed germination under very-low-fluence conditions) and in the cytoplasm (e.g. negative gravitropism in blue light and red-enhanced phototropism). Promotes seed germination, suppression of hypocotyl elongation, and randomization of hypocotyl growth orientation in far-red light; these responses to far-red light are repressed by UNE10/PIF8. Stabilizes UNE10/PIF8 but sequesters PIF3/PAP3 from its target genes promoters in far-red light. The polypeptide is Phytochrome A (Arabidopsis thaliana (Mouse-ear cress)).